The following is a 228-amino-acid chain: Probable endo-1,4-beta-xylanase A (228 aa).

An N-terminal signal peptide occupies residues 1 to 18; the sequence is MVSFSYLLLACSAIGALA. N29 carries an N-linked (GlcNAc...) asparagine glycan. The 189-residue stretch at 40–228 folds into the GH11 domain; it reads AGTPSSTGWN…SSGSASITVY (189 aa). Catalysis depends on E124, which acts as the Nucleophile. E215 acts as the Proton donor in catalysis.

This sequence belongs to the glycosyl hydrolase 11 (cellulase G) family.

Its subcellular location is the secreted. The enzyme catalyses Endohydrolysis of (1-&gt;4)-beta-D-xylosidic linkages in xylans.. The protein operates within glycan degradation; xylan degradation. Functionally, endo-1,4-beta-xylanase involved in the hydrolysis of xylan, a major structural heterogeneous polysaccharide found in plant biomass representing the second most abundant polysaccharide in the biosphere, after cellulose. The sequence is that of Probable endo-1,4-beta-xylanase A (xlnA) from Aspergillus fumigatus (strain CBS 144.89 / FGSC A1163 / CEA10) (Neosartorya fumigata).